Reading from the N-terminus, the 668-residue chain is tRNA 5-methylaminomethyl-2-thiouridine biosynthesis bifunctional protein MnmC (668 aa).

The tRNA (mnm(5)s(2)U34)-methyltransferase stretch occupies residues Met1–Glu245. The segment at Ile270–Gly668 is FAD-dependent cmnm(5)s(2)U34 oxidoreductase.

This sequence in the N-terminal section; belongs to the methyltransferase superfamily. tRNA (mnm(5)s(2)U34)-methyltransferase family. It in the C-terminal section; belongs to the DAO family. The cofactor is FAD.

Its subcellular location is the cytoplasm. The enzyme catalyses 5-aminomethyl-2-thiouridine(34) in tRNA + S-adenosyl-L-methionine = 5-methylaminomethyl-2-thiouridine(34) in tRNA + S-adenosyl-L-homocysteine + H(+). Its function is as follows. Catalyzes the last two steps in the biosynthesis of 5-methylaminomethyl-2-thiouridine (mnm(5)s(2)U) at the wobble position (U34) in tRNA. Catalyzes the FAD-dependent demodification of cmnm(5)s(2)U34 to nm(5)s(2)U34, followed by the transfer of a methyl group from S-adenosyl-L-methionine to nm(5)s(2)U34, to form mnm(5)s(2)U34. The polypeptide is tRNA 5-methylaminomethyl-2-thiouridine biosynthesis bifunctional protein MnmC (Escherichia coli O6:H1 (strain CFT073 / ATCC 700928 / UPEC)).